The following is a 549-amino-acid chain: Membrane protein insertase YidC (549 aa).

Residues 8–28 (VLLATVLSVAVLIVWQFVFPS) form a helical membrane-spanning segment. Residues 29 to 39 (PKPKPQPPKPP) are compositionally biased toward pro residues. Positions 29–68 (PKPKPQPPKPPEAAQRAEAPAAPAPGQPAAQAPAPAVPQD) are disordered. Composition is skewed to low complexity over residues 40–49 (EAAQRAEAPA) and 55–68 (QPAA…VPQD). The next 4 helical transmembrane spans lie at 328 to 348 (IDYG…LFVM), 354 to 374 (LVAN…VLLY), 424 to 444 (LGGC…YATL), and 502 to 522 (PGFF…YIFV).

The protein belongs to the OXA1/ALB3/YidC family. Type 1 subfamily. Interacts with the Sec translocase complex via SecD. Specifically interacts with transmembrane segments of nascent integral membrane proteins during membrane integration.

It is found in the cell inner membrane. In terms of biological role, required for the insertion and/or proper folding and/or complex formation of integral membrane proteins into the membrane. Involved in integration of membrane proteins that insert both dependently and independently of the Sec translocase complex, as well as at least some lipoproteins. Aids folding of multispanning membrane proteins. The protein is Membrane protein insertase YidC of Anaeromyxobacter sp. (strain Fw109-5).